Consider the following 316-residue polypeptide: MAIVSVKLTSNQVDKFLILWRPYLVHNNHNYAKYTFKIDGTLIIIYNTNTCTINTHDINSFLNTFLKREDLTLFNVIKQQVNTKKNNQNVMSQSEIYESAQVIIGSDEVGVGDLFGGIVVCAVSLKKSDFKKINHLKIIDSKKLNDQQMQEIYQQIKNQISYTIVSYNPKEYNELIKEYNNAHILKTILHYKALQSEIHKHAKYSIFSVVDAFSSLKNWNQYLQKVNFQPYEPNLLIPKAESIYTSVALASIIARVMFLKMIAIIEEQFNVKIPLGSSNPLVNDVASNIFQKFGLKILKQVAKEHFSNFQQIIKNK.

The RNase H type-2 domain maps to 101–316 (QVIIGSDEVG…SNFQQIIKNK (216 aa)). The a divalent metal cation site is built by Asp107, Glu108, and Asp211.

It belongs to the RNase HII family. RnhC subfamily. It depends on Mn(2+) as a cofactor. Mg(2+) serves as cofactor.

It localises to the cytoplasm. It catalyses the reaction Endonucleolytic cleavage to 5'-phosphomonoester.. Endonuclease that specifically degrades the RNA of RNA-DNA hybrids. The sequence is that of Ribonuclease HIII (rnhC) from Ureaplasma parvum serovar 3 (strain ATCC 700970).